The chain runs to 490 residues: ATP synthase subunit beta, plastid (490 aa).

ATP is bound at residue 170–177 (GGAGVGKT).

This sequence belongs to the ATPase alpha/beta chains family. In terms of assembly, F-type ATPases have 2 components, CF(1) - the catalytic core - and CF(0) - the membrane proton channel. CF(1) has five subunits: alpha(3), beta(3), gamma(1), delta(1), epsilon(1). CF(0) has four main subunits: a(1), b(1), b'(1) and c(9-12).

The protein resides in the plastid thylakoid membrane. It carries out the reaction ATP + H2O + 4 H(+)(in) = ADP + phosphate + 5 H(+)(out). Functionally, produces ATP from ADP in the presence of a proton gradient across the membrane. The catalytic sites are hosted primarily by the beta subunits. The polypeptide is ATP synthase subunit beta, plastid (Cuscuta reflexa (Southern Asian dodder)).